A 618-amino-acid polypeptide reads, in one-letter code: UvrABC system protein C (618 aa).

A GIY-YIG domain is found at aspartate 13–isoleucine 92. Residues leucine 204–isoleucine 239 enclose the UVR domain.

Belongs to the UvrC family. As to quaternary structure, interacts with UvrB in an incision complex.

It is found in the cytoplasm. The UvrABC repair system catalyzes the recognition and processing of DNA lesions. UvrC both incises the 5' and 3' sides of the lesion. The N-terminal half is responsible for the 3' incision and the C-terminal half is responsible for the 5' incision. The sequence is that of UvrABC system protein C from Clostridium botulinum (strain Kyoto / Type A2).